The chain runs to 367 residues: MKFIIEREQLLKPLQQVSGPLGGRPTLPILGNLLLKVTENTLSLTGTDLEMEMMARVSLSQSHEIGATTVPARKFFDIWRGLPEGAEISVELDGDRLLVRSGRSRFSLSTLPASDFPNLDDWQSEVEFTLPQATLKRLIESTQFSMAHQDVRYYLNGMLFETENTELRTVATDGHRLAVCAMDIGQSLPGHSVIVPRKGVIELMRLLDGSGESLLQLQIGSNNLRAHVGDFIFTSKLVDGRFPDYRRVLPKNPTKTVIAGCDILKQAFSRAAILSNEKFRGVRINLTNGQLKITANNPEQEEAEEIVDVQYQGEEMEIGFNVSYLLDVLNTLKCEEVKLLLTDAVSSVQVENVASAAAAYVVMPMRL.

The protein belongs to the beta sliding clamp family. Forms a ring-shaped head-to-tail homodimer around DNA which binds and tethers DNA polymerases and other proteins to the DNA. The DNA replisome complex has a single clamp-loading complex (3 tau and 1 each of delta, delta', psi and chi subunits) which binds 3 Pol III cores (1 core on the leading strand and 2 on the lagging strand) each with a beta sliding clamp dimer. Additional proteins in the replisome are other copies of gamma, psi and chi, Ssb, DNA helicase and RNA primase.

The protein resides in the cytoplasm. In terms of biological role, confers DNA tethering and processivity to DNA polymerases and other proteins. Acts as a clamp, forming a ring around DNA (a reaction catalyzed by the clamp-loading complex) which diffuses in an ATP-independent manner freely and bidirectionally along dsDNA. Initially characterized for its ability to contact the catalytic subunit of DNA polymerase III (Pol III), a complex, multichain enzyme responsible for most of the replicative synthesis in bacteria; Pol III exhibits 3'-5' exonuclease proofreading activity. The beta chain is required for initiation of replication as well as for processivity of DNA replication. The sequence is that of Beta sliding clamp (dnaN) from Proteus mirabilis.